A 280-amino-acid chain; its full sequence is MSEKFDCHYCRDPLQGKKYVQKDGRHCCLKCFDKFCANTCVECRKPISADAKEVHYKNRYWHDTCFRCAKCLHPLASETFVSKDGKILCNKCATREDSPRCKGCFKAIVAGDQNVEYKGTIWHKDCFTCSNCKQVIGTGSFFPKGEDFYCVTCHETKFAKHCVKCNKAITSGGITYQDQPWHAECFVCVTCSKKLAGQRFTAVEDQYYCVDCYKNFVAKKCAGCKNPITGFGKGSSVVAYEGQSWHDYCFHCKKCSVNLANKRFVFHNEQVYCPDCAKKL.

S2 is subject to N-acetylserine. K4 is modified (N6-acetyllysine). The segment at 7–31 adopts a C4-type zinc-finger fold; it reads CHYCRDPLQGKKYVQKDGRHCCLKC. 4 consecutive LIM zinc-binding domains span residues 40–92, 101–153, 162–212, and 221–276; these read CVEC…CNKC, CKGC…CVTC, CVKC…CVDC, and CAGC…CPDC. K86 participates in a covalent cross-link: Glycyl lysine isopeptide (Lys-Gly) (interchain with G-Cter in SUMO2).

It localises to the cytoplasm. In terms of biological role, may have an involvement in muscle development or hypertrophy. Isoform 2 binds to RBP-J and plays a negative regulatory role in the RBP-J-mediated transcription in mammalian systems. This Rattus norvegicus (Rat) protein is Four and a half LIM domains protein 1 (Fhl1).